A 79-amino-acid polypeptide reads, in one-letter code: DNA-directed RNA polymerase subunit omega (79 aa).

Belongs to the RNA polymerase subunit omega family. In cyanobacteria the RNAP catalytic core is composed of 2 alpha, 1 beta, 1 beta', 1 gamma and 1 omega subunit. When a sigma factor is associated with the core the holoenzyme is formed, which can initiate transcription.

It catalyses the reaction RNA(n) + a ribonucleoside 5'-triphosphate = RNA(n+1) + diphosphate. Its function is as follows. Promotes RNA polymerase assembly. Latches the N- and C-terminal regions of the beta' subunit thereby facilitating its interaction with the beta and alpha subunits. This is DNA-directed RNA polymerase subunit omega from Synechococcus sp. (strain JA-2-3B'a(2-13)) (Cyanobacteria bacterium Yellowstone B-Prime).